Consider the following 217-residue polypeptide: Orotate phosphoribosyltransferase (217 aa).

5-phospho-alpha-D-ribose 1-diphosphate is bound at residue K26. 34–35 (FF) serves as a coordination point for orotate. Residues 72–73 (YK), R99, K100, K103, H105, and 124–132 (DDVITAGTA) contribute to the 5-phospho-alpha-D-ribose 1-diphosphate site. Orotate is bound by residues T128 and R156.

The protein belongs to the purine/pyrimidine phosphoribosyltransferase family. PyrE subfamily. Homodimer. Mg(2+) is required as a cofactor.

It carries out the reaction orotidine 5'-phosphate + diphosphate = orotate + 5-phospho-alpha-D-ribose 1-diphosphate. Its pathway is pyrimidine metabolism; UMP biosynthesis via de novo pathway; UMP from orotate: step 1/2. In terms of biological role, catalyzes the transfer of a ribosyl phosphate group from 5-phosphoribose 1-diphosphate to orotate, leading to the formation of orotidine monophosphate (OMP). This is Orotate phosphoribosyltransferase from Aeromonas salmonicida (strain A449).